A 276-amino-acid chain; its full sequence is Adenylate kinase (276 aa).

Residue 52–57 (GAGKGT) coordinates ATP. Positions 72–101 (ATGDMLRAQVAAKTPLGREAKKIMDAGGLV) are NMP. Residues Thr73, Arg78, 99–101 (GLV), 128–131 (GFPR), and Gln135 contribute to the AMP site. The LID stretch occupies residues 169 to 206 (GRLVHPASGRSYHKIFNPPKAPMTDDVTGEPLIQRSDD). Residues Arg170 and 179–180 (SY) contribute to the ATP site. Positions 203 and 214 each coordinate AMP. Gln242 is an ATP binding site.

Belongs to the adenylate kinase family. AK2 subfamily. Monomer.

Its subcellular location is the cytoplasm. It localises to the cytosol. The protein resides in the mitochondrion intermembrane space. It carries out the reaction AMP + ATP = 2 ADP. Functionally, catalyzes the reversible transfer of the terminal phosphate group between ATP and AMP. Plays an important role in cellular energy homeostasis and in adenine nucleotide metabolism. Adenylate kinase activity is critical for regulation of the phosphate utilization and the AMP de novo biosynthesis pathways. The sequence is that of Adenylate kinase (adk1) from Pyrenophora tritici-repentis (strain Pt-1C-BFP) (Wheat tan spot fungus).